The following is a 258-amino-acid chain: Imidazole glycerol phosphate synthase subunit HisF (258 aa).

Catalysis depends on residues aspartate 11 and aspartate 130.

This sequence belongs to the HisA/HisF family. Heterodimer of HisH and HisF.

It localises to the cytoplasm. It carries out the reaction 5-[(5-phospho-1-deoxy-D-ribulos-1-ylimino)methylamino]-1-(5-phospho-beta-D-ribosyl)imidazole-4-carboxamide + L-glutamine = D-erythro-1-(imidazol-4-yl)glycerol 3-phosphate + 5-amino-1-(5-phospho-beta-D-ribosyl)imidazole-4-carboxamide + L-glutamate + H(+). The protein operates within amino-acid biosynthesis; L-histidine biosynthesis; L-histidine from 5-phospho-alpha-D-ribose 1-diphosphate: step 5/9. IGPS catalyzes the conversion of PRFAR and glutamine to IGP, AICAR and glutamate. The HisF subunit catalyzes the cyclization activity that produces IGP and AICAR from PRFAR using the ammonia provided by the HisH subunit. This Methylobacterium nodulans (strain LMG 21967 / CNCM I-2342 / ORS 2060) protein is Imidazole glycerol phosphate synthase subunit HisF.